A 487-amino-acid chain; its full sequence is UDP-N-acetylmuramate--L-alanine ligase (487 aa).

An ATP-binding site is contributed by 126-132 (GTHGKTT).

The protein belongs to the MurCDEF family.

The protein resides in the cytoplasm. The catalysed reaction is UDP-N-acetyl-alpha-D-muramate + L-alanine + ATP = UDP-N-acetyl-alpha-D-muramoyl-L-alanine + ADP + phosphate + H(+). Its pathway is cell wall biogenesis; peptidoglycan biosynthesis. Functionally, cell wall formation. The sequence is that of UDP-N-acetylmuramate--L-alanine ligase from Proteus mirabilis (strain HI4320).